We begin with the raw amino-acid sequence, 216 residues long: Nucleoside triphosphate pyrophosphatase (216 aa).

The Proton acceptor role is filled by Asp86.

Belongs to the Maf family. The cofactor is a divalent metal cation.

The protein resides in the cytoplasm. The catalysed reaction is a ribonucleoside 5'-triphosphate + H2O = a ribonucleoside 5'-phosphate + diphosphate + H(+). The enzyme catalyses a 2'-deoxyribonucleoside 5'-triphosphate + H2O = a 2'-deoxyribonucleoside 5'-phosphate + diphosphate + H(+). Its function is as follows. Nucleoside triphosphate pyrophosphatase. May have a dual role in cell division arrest and in preventing the incorporation of modified nucleotides into cellular nucleic acids. This is Nucleoside triphosphate pyrophosphatase from Dictyostelium discoideum (Social amoeba).